Here is a 326-residue protein sequence, read N- to C-terminus: MFSQTVSVAVTGGTGQIAYCFLFALAHGDIFGPDTGIDLRIYDIPGTERSLSGVRMELDDGAFPLLQRVQVTTSLHDAFDDIDAAFLIGSVPRGPGMERRDLLKKNGEIFATQGKVLNTAAKREAKIFVVGNPVNTNCWIAMNHAPRLLRKNFHAMLRLDQNRMHSMLAHRAEVPLSAVSQVVVWGNHSAKQVPDFTQALIHGRPIVETIADRDWLENIMVPSVQSRGSAVIEARGKSSAASAARALAEAARSIYQPKEGEWFSSGVCSDNNPYGLPEDIIFGFPCRMLGTGEYEIVPGLPWDAFIRGKMQISLDEILQEKASVSL.

Residue 12–18 coordinates NAD(+); the sequence is GGTGQIA. Residues arginine 93 and arginine 99 each contribute to the substrate site. Residues asparagine 106, glutamine 113, and 130–132 each bind NAD(+); that span reads VGN. Substrate-binding residues include asparagine 132 and arginine 163. Catalysis depends on histidine 188, which acts as the Proton acceptor.

Belongs to the LDH/MDH superfamily. MDH type 2 family.

It carries out the reaction (S)-malate + NAD(+) = oxaloacetate + NADH + H(+). Catalyzes the reversible oxidation of malate to oxaloacetate. This is Malate dehydrogenase from Chlamydia muridarum (strain MoPn / Nigg).